Here is a 206-residue protein sequence, read N- to C-terminus: ATP phosphoribosyltransferase (206 aa).

Belongs to the ATP phosphoribosyltransferase family. Short subfamily. In terms of assembly, heteromultimer composed of HisG and HisZ subunits.

The protein resides in the cytoplasm. It catalyses the reaction 1-(5-phospho-beta-D-ribosyl)-ATP + diphosphate = 5-phospho-alpha-D-ribose 1-diphosphate + ATP. It participates in amino-acid biosynthesis; L-histidine biosynthesis; L-histidine from 5-phospho-alpha-D-ribose 1-diphosphate: step 1/9. Functionally, catalyzes the condensation of ATP and 5-phosphoribose 1-diphosphate to form N'-(5'-phosphoribosyl)-ATP (PR-ATP). Has a crucial role in the pathway because the rate of histidine biosynthesis seems to be controlled primarily by regulation of HisG enzymatic activity. This Wolinella succinogenes (strain ATCC 29543 / DSM 1740 / CCUG 13145 / JCM 31913 / LMG 7466 / NCTC 11488 / FDC 602W) (Vibrio succinogenes) protein is ATP phosphoribosyltransferase.